Consider the following 590-residue polypeptide: Arginine--tRNA ligase (590 aa).

The 'HIGH' region signature appears at 130 to 140; that stretch reads PNIAKEMHVGH.

This sequence belongs to the class-I aminoacyl-tRNA synthetase family. Monomer.

The protein localises to the cytoplasm. The enzyme catalyses tRNA(Arg) + L-arginine + ATP = L-arginyl-tRNA(Arg) + AMP + diphosphate. This chain is Arginine--tRNA ligase, found in Synechococcus sp. (strain CC9605).